The sequence spans 76 residues: uncharacterized protein (76 aa).

Residues 6–60 (LKKNRLEKGFTQEEVAKAAQIGRAYYTMIENGTRKPSVIVSKKIGEKLGFDWTIF) form the HTH cro/C1-type domain. Residues 17 to 36 (QEEVAKAAQIGRAYYTMIEN) constitute a DNA-binding region (H-T-H motif).

This is an uncharacterized protein from Bacillus subtilis (strain 168).